We begin with the raw amino-acid sequence, 179 residues long: Large ribosomal subunit protein uL5 (179 aa).

It belongs to the universal ribosomal protein uL5 family. Part of the 50S ribosomal subunit; part of the 5S rRNA/L5/L18/L25 subcomplex. Contacts the 5S rRNA and the P site tRNA. Forms a bridge to the 30S subunit in the 70S ribosome.

Its function is as follows. This is one of the proteins that bind and probably mediate the attachment of the 5S RNA into the large ribosomal subunit, where it forms part of the central protuberance. In the 70S ribosome it contacts protein S13 of the 30S subunit (bridge B1b), connecting the 2 subunits; this bridge is implicated in subunit movement. Contacts the P site tRNA; the 5S rRNA and some of its associated proteins might help stabilize positioning of ribosome-bound tRNAs. The chain is Large ribosomal subunit protein uL5 from Burkholderia vietnamiensis (strain G4 / LMG 22486) (Burkholderia cepacia (strain R1808)).